Reading from the N-terminus, the 234-residue chain is LexA repressor (234 aa).

Positions F26–S46 form a DNA-binding region, H-T-H motif. A disordered region spans residues A73 to K100. A compositionally biased stretch (low complexity) spans A91–K100. Residues S154 and K192 each act as for autocatalytic cleavage activity in the active site.

Belongs to the peptidase S24 family. In terms of assembly, homodimer.

The enzyme catalyses Hydrolysis of Ala-|-Gly bond in repressor LexA.. Functionally, represses a number of genes involved in the response to DNA damage (SOS response), including recA and lexA. In the presence of single-stranded DNA, RecA interacts with LexA causing an autocatalytic cleavage which disrupts the DNA-binding part of LexA, leading to derepression of the SOS regulon and eventually DNA repair. This Novosphingobium aromaticivorans (strain ATCC 700278 / DSM 12444 / CCUG 56034 / CIP 105152 / NBRC 16084 / F199) protein is LexA repressor.